The primary structure comprises 586 residues: Aspartate--tRNA(Asp/Asn) ligase (586 aa).

Glu-172 provides a ligand contact to L-aspartate. The segment at 196 to 199 is aspartate; sequence QLYK. An L-aspartate-binding site is contributed by Arg-218. ATP is bound by residues 218–220 and Gln-227; that span reads RDE. L-aspartate is bound at residue His-446. Position 480 (Glu-480) interacts with ATP. Arg-487 lines the L-aspartate pocket. 532–535 is a binding site for ATP; sequence GIDR.

Belongs to the class-II aminoacyl-tRNA synthetase family. Type 1 subfamily. Homodimer.

The protein resides in the cytoplasm. The enzyme catalyses tRNA(Asx) + L-aspartate + ATP = L-aspartyl-tRNA(Asx) + AMP + diphosphate. Functionally, aspartyl-tRNA synthetase with relaxed tRNA specificity since it is able to aspartylate not only its cognate tRNA(Asp) but also tRNA(Asn). Reaction proceeds in two steps: L-aspartate is first activated by ATP to form Asp-AMP and then transferred to the acceptor end of tRNA(Asp/Asn). The chain is Aspartate--tRNA(Asp/Asn) ligase from Borreliella burgdorferi (strain ATCC 35210 / DSM 4680 / CIP 102532 / B31) (Borrelia burgdorferi).